Here is a 455-residue protein sequence, read N- to C-terminus: Phosphoglucosamine mutase (455 aa).

The active-site Phosphoserine intermediate is the serine 108. Mg(2+)-binding residues include serine 108, aspartate 246, aspartate 248, and aspartate 250. Serine 108 carries the phosphoserine modification.

The protein belongs to the phosphohexose mutase family. The cofactor is Mg(2+). In terms of processing, activated by phosphorylation.

It carries out the reaction alpha-D-glucosamine 1-phosphate = D-glucosamine 6-phosphate. Its function is as follows. Catalyzes the conversion of glucosamine-6-phosphate to glucosamine-1-phosphate. This is Phosphoglucosamine mutase from Frankia casuarinae (strain DSM 45818 / CECT 9043 / HFP020203 / CcI3).